The sequence spans 134 residues: Probable thionin-2.4 (134 aa).

An N-terminal signal peptide occupies residues 1–24 (MEGKTLIVSVLIMSLFMAQNQVDA). Cystine bridges form between cysteine 27–cysteine 64, cysteine 28–cysteine 56, and cysteine 40–cysteine 50. A propeptide spans 71 to 134 (DILENTGDAV…KGSMNAVENA (64 aa)) (acidic domain).

Belongs to the plant thionin (TC 1.C.44) family.

Its subcellular location is the secreted. Thionins are small plant proteins which are toxic to animal cells. They seem to exert their toxic effect at the level of the cell membrane. Their precise function is not known. This Arabidopsis thaliana (Mouse-ear cress) protein is Probable thionin-2.4.